A 310-amino-acid polypeptide reads, in one-letter code: Lipoyl synthase (310 aa).

7 residues coordinate [4Fe-4S] cluster: Cys-45, Cys-50, Cys-56, Cys-71, Cys-75, Cys-78, and Ser-285. The Radical SAM core domain occupies 57-274; the sequence is WTKKHATVMI…GSIARAKGFL (218 aa).

Belongs to the radical SAM superfamily. Lipoyl synthase family. It depends on [4Fe-4S] cluster as a cofactor.

It is found in the cytoplasm. It carries out the reaction [[Fe-S] cluster scaffold protein carrying a second [4Fe-4S](2+) cluster] + N(6)-octanoyl-L-lysyl-[protein] + 2 oxidized [2Fe-2S]-[ferredoxin] + 2 S-adenosyl-L-methionine + 4 H(+) = [[Fe-S] cluster scaffold protein] + N(6)-[(R)-dihydrolipoyl]-L-lysyl-[protein] + 4 Fe(3+) + 2 hydrogen sulfide + 2 5'-deoxyadenosine + 2 L-methionine + 2 reduced [2Fe-2S]-[ferredoxin]. Its pathway is protein modification; protein lipoylation via endogenous pathway; protein N(6)-(lipoyl)lysine from octanoyl-[acyl-carrier-protein]: step 2/2. Functionally, catalyzes the radical-mediated insertion of two sulfur atoms into the C-6 and C-8 positions of the octanoyl moiety bound to the lipoyl domains of lipoate-dependent enzymes, thereby converting the octanoylated domains into lipoylated derivatives. This chain is Lipoyl synthase, found in Novosphingobium aromaticivorans (strain ATCC 700278 / DSM 12444 / CCUG 56034 / CIP 105152 / NBRC 16084 / F199).